Consider the following 215-residue polypeptide: Ras-related protein Rab-14 (215 aa).

An N-acetylalanine modification is found at alanine 2. GTP-binding residues include glycine 21, valine 22, glycine 23, lysine 24, serine 25, cysteine 26, alanine 38, aspartate 39, cysteine 40, histidine 42, and threonine 43. Residue serine 25 participates in Mg(2+) binding. Positions 42 to 47 (HTIGVE) match the Switch 1 motif. Threonine 43 and aspartate 66 together coordinate Mg(2+). Residues 68–77 (AGQERFRAVT) carry the Switch 2 motif. GTP-binding residues include glycine 69, asparagine 124, lysine 125, aspartate 127, alanine 155, and lysine 156. Residues 188 to 215 (SGVQHKPSAPQGGRLTSEPQPQREGCGC) form a disordered region. Residues cysteine 213 and cysteine 215 are each lipidated (S-geranylgeranyl cysteine). A Cysteine methyl ester modification is found at cysteine 215.

This sequence belongs to the small GTPase superfamily. Rab family. The cofactor is Mg(2+).

The protein resides in the recycling endosome. The protein localises to the early endosome membrane. Its subcellular location is the golgi apparatus membrane. It localises to the golgi apparatus. It is found in the trans-Golgi network membrane. The protein resides in the cytoplasmic vesicle. The protein localises to the phagosome. The catalysed reaction is GTP + H2O = GDP + phosphate + H(+). Its activity is regulated as follows. Regulated by guanine nucleotide exchange factors (GEFs) including DENND6A and DENND6B which promote the exchange of bound GDP for free GTP. Regulated by GTPase activating proteins (GAPs) which increase the GTP hydrolysis activity. Inhibited by GDP dissociation inhibitors (GDIs) which prevent Rab-GDP dissociation. In terms of biological role, the small GTPases Rab are key regulators of intracellular membrane trafficking, from the formation of transport vesicles to their fusion with membranes. Rabs cycle between an inactive GDP-bound form and an active GTP-bound form that is able to recruit to membranes different set of downstream effectors directly responsible for vesicle formation, movement, tethering and fusion. Involved in membrane trafficking between the Golgi complex and endosomes during early embryonic development. Regulates the Golgi to endosome transport of FGFR-containing vesicles during early development, a key process for developing basement membrane and epiblast and primitive endoderm lineages during early postimplantation development. May act by modulating the kinesin KIF16B-cargo association to endosomes. Regulates, together with its guanine nucleotide exchange factor DENND6A, the specific endocytic transport of ADAM10, N-cadherin/CDH2 shedding and cell-cell adhesion. Mediates endosomal tethering and fusion through the interaction with RUFY1 and RAB4B. Interaction with RAB11FIP1 may function in the process of neurite formation. The protein is Ras-related protein Rab-14 (RAB14) of Gallus gallus (Chicken).